The sequence spans 30 residues: Cyclotide hyen-H (30 aa).

Residues 1–30 (KIPCGESCVYIPCISSVLGCSCSNKVCYKD) constitute a cross-link (cyclopeptide (Lys-Asp)). Intrachain disulfides connect Cys-4–Cys-20, Cys-8–Cys-22, and Cys-13–Cys-27.

This is a cyclic peptide. As to expression, detected in stems (at protein level).

Its function is as follows. Probably participates in a plant defense mechanism. The polypeptide is Cyclotide hyen-H (Pigea enneasperma (Spade flower)).